We begin with the raw amino-acid sequence, 41 residues long: Cytochrome b559 subunit beta (41 aa).

A helical transmembrane segment spans residues 16–32; the sequence is WLAVHALAVPTVFFLGA. A heme-binding site is contributed by histidine 20.

This sequence belongs to the PsbE/PsbF family. As to quaternary structure, heterodimer of an alpha subunit and a beta subunit. PSII is composed of 1 copy each of membrane proteins PsbA, PsbB, PsbC, PsbD, PsbE, PsbF, PsbH, PsbI, PsbJ, PsbK, PsbL, PsbM, PsbT, PsbX, PsbY, PsbZ, Psb30/Ycf12, at least 3 peripheral proteins of the oxygen-evolving complex and a large number of cofactors. It forms dimeric complexes. The cofactor is heme b.

The protein resides in the plastid. The protein localises to the chloroplast thylakoid membrane. Functionally, this b-type cytochrome is tightly associated with the reaction center of photosystem II (PSII). PSII is a light-driven water:plastoquinone oxidoreductase that uses light energy to abstract electrons from H(2)O, generating O(2) and a proton gradient subsequently used for ATP formation. It consists of a core antenna complex that captures photons, and an electron transfer chain that converts photonic excitation into a charge separation. The protein is Cytochrome b559 subunit beta of Chlorella vulgaris (Green alga).